The sequence spans 739 residues: Phosphoribosylformylglycinamidine synthase subunit PurL (739 aa).

H54 is a catalytic residue. ATP contacts are provided by Y57 and K96. A Mg(2+)-binding site is contributed by E98. Substrate-binding positions include 99 to 102 (SHNH) and R121. Catalysis depends on H100, which acts as the Proton acceptor. D122 serves as a coordination point for Mg(2+). Q245 is a substrate binding site. D273 lines the Mg(2+) pocket. 317–319 (ESQ) contacts substrate. The ATP site is built by D500 and G537. Position 538 (N538) interacts with Mg(2+). Residue S540 coordinates substrate.

The protein belongs to the FGAMS family. As to quaternary structure, monomer. Part of the FGAM synthase complex composed of 1 PurL, 1 PurQ and 2 PurS subunits.

The protein localises to the cytoplasm. It carries out the reaction N(2)-formyl-N(1)-(5-phospho-beta-D-ribosyl)glycinamide + L-glutamine + ATP + H2O = 2-formamido-N(1)-(5-O-phospho-beta-D-ribosyl)acetamidine + L-glutamate + ADP + phosphate + H(+). It participates in purine metabolism; IMP biosynthesis via de novo pathway; 5-amino-1-(5-phospho-D-ribosyl)imidazole from N(2)-formyl-N(1)-(5-phospho-D-ribosyl)glycinamide: step 1/2. In terms of biological role, part of the phosphoribosylformylglycinamidine synthase complex involved in the purines biosynthetic pathway. Catalyzes the ATP-dependent conversion of formylglycinamide ribonucleotide (FGAR) and glutamine to yield formylglycinamidine ribonucleotide (FGAM) and glutamate. The FGAM synthase complex is composed of three subunits. PurQ produces an ammonia molecule by converting glutamine to glutamate. PurL transfers the ammonia molecule to FGAR to form FGAM in an ATP-dependent manner. PurS interacts with PurQ and PurL and is thought to assist in the transfer of the ammonia molecule from PurQ to PurL. The sequence is that of Phosphoribosylformylglycinamidine synthase subunit PurL from Bacillus mycoides (strain KBAB4) (Bacillus weihenstephanensis).